A 76-amino-acid chain; its full sequence is Tautomerase PptA (76 aa).

Catalysis depends on Pro-2, which acts as the Proton acceptor; via imino nitrogen.

The protein belongs to the 4-oxalocrotonate tautomerase family. PptA subfamily. In terms of assembly, homodimer.

The protein resides in the cytoplasm. The chain is Tautomerase PptA from Enterobacter sp. (strain 638).